Here is a 148-residue protein sequence, read N- to C-terminus: Transcriptional regulator MraZ (148 aa).

SpoVT-AbrB domains follow at residues 5–53 (ETAI…AEKE) and 82–125 (SAVL…SEQA).

This sequence belongs to the MraZ family. Forms oligomers.

The protein localises to the cytoplasm. Its subcellular location is the nucleoid. The sequence is that of Transcriptional regulator MraZ from Xanthomonas axonopodis pv. citri (strain 306).